A 355-amino-acid chain; its full sequence is Hydroxylysine kinase (355 aa).

Catalysis depends on Asp-215, which acts as the Proton acceptor.

This sequence belongs to the aminoglycoside phosphotransferase family.

Its subcellular location is the cytoplasm. It catalyses the reaction (5R)-5-hydroxy-L-lysine + GTP = (5R)-5-phosphooxy-L-lysine + GDP + H(+). Functionally, catalyzes the GTP-dependent phosphorylation of 5-hydroxy-L-lysine. The chain is Hydroxylysine kinase (hykk) from Danio rerio (Zebrafish).